The following is a 257-amino-acid chain: Protein UL133 (257 aa).

Helical transmembrane passes span 14–34 (WGVPTIIVAWITCAALGIWCL) and 45–65 (PGIAAVVGCSVFMIFLCAYLI). The interval 149 to 232 (PTVFVPPPSE…AMPQMPPGVA (84 aa)) is disordered. A compositionally biased stretch (pro residues) spans 164-175 (VIPPQPPTPTSE). The segment covering 179-193 (KKGRAKDKPKGRPKN) has biased composition (basic residues). The span at 214 to 228 (GGPPDASPPAMPQMP) shows a compositional bias: pro residues.

The protein resides in the host Golgi apparatus membrane. The sequence is that of Protein UL133 (UL133) from Human cytomegalovirus (strain Merlin) (HHV-5).